The primary structure comprises 859 residues: DNA mismatch repair protein MutS (859 aa).

An ATP-binding site is contributed by 614–621; sequence GPNMGGKS.

It belongs to the DNA mismatch repair MutS family.

In terms of biological role, this protein is involved in the repair of mismatches in DNA. It is possible that it carries out the mismatch recognition step. This protein has a weak ATPase activity. This Histophilus somni (strain 2336) (Haemophilus somnus) protein is DNA mismatch repair protein MutS.